The chain runs to 896 residues: Bifunctional glutamine synthetase adenylyltransferase/adenylyl-removing enzyme (896 aa).

Positions 1-411 (MSDNRLDTAR…LFNEILSEPE (411 aa)) are adenylyl removase. The segment at 417–896 (NSEWQWAWQD…EVFGEEAATV (480 aa)) is adenylyl transferase.

It belongs to the GlnE family. Mg(2+) serves as cofactor.

The enzyme catalyses [glutamine synthetase]-O(4)-(5'-adenylyl)-L-tyrosine + phosphate = [glutamine synthetase]-L-tyrosine + ADP. The catalysed reaction is [glutamine synthetase]-L-tyrosine + ATP = [glutamine synthetase]-O(4)-(5'-adenylyl)-L-tyrosine + diphosphate. In terms of biological role, involved in the regulation of glutamine synthetase GlnA, a key enzyme in the process to assimilate ammonia. When cellular nitrogen levels are high, the C-terminal adenylyl transferase (AT) inactivates GlnA by covalent transfer of an adenylyl group from ATP to specific tyrosine residue of GlnA, thus reducing its activity. Conversely, when nitrogen levels are low, the N-terminal adenylyl removase (AR) activates GlnA by removing the adenylyl group by phosphorolysis, increasing its activity. The regulatory region of GlnE binds the signal transduction protein PII (GlnB) which indicates the nitrogen status of the cell. The sequence is that of Bifunctional glutamine synthetase adenylyltransferase/adenylyl-removing enzyme from Neisseria meningitidis serogroup B (strain ATCC BAA-335 / MC58).